The following is a 241-amino-acid chain: Chloride intracellular channel protein 1 (241 aa).

Alanine 2 carries the post-translational modification N-acetylalanine. The tract at residues 2 to 90 (AEEQPQVELF…EEFLEAVLCP (89 aa)) is required for insertion into the membrane. Lysine 13 is modified (N6-acetyllysine). Residues 24–27 (CPFS) carry the G-site motif. Cysteine 24 and cysteine 59 are disulfide-bonded. Residues 26–46 (FSQRLFMVLWLKGVTFNVTTV) form a helical membrane-spanning segment. The 141-residue stretch at 93-233 (YPKLAALNPE…PDDEEIELAY (141 aa)) folds into the GST C-terminal domain. An N6-acetyllysine modification is found at lysine 119. Serine 121 is subject to Phosphoserine. Lysine 131 bears the N6-acetyllysine mark. Serine 156 bears the Phosphoserine mark. A Phosphotyrosine modification is found at tyrosine 233.

It belongs to the chloride channel CLIC family. As to quaternary structure, monomer. Homodimer (in vitro). Interacts with TRAPPC2. Dimerization requires a conformation change that leads to the exposure of a large hydrophobic surface. In vivo, this may lead to membrane insertion.

The protein resides in the nucleus. The protein localises to the nucleus membrane. It localises to the cytoplasm. Its subcellular location is the cell membrane. It is found in the endoplasmic reticulum. It carries out the reaction L-dehydroascorbate + 2 glutathione = glutathione disulfide + L-ascorbate. The catalysed reaction is chloride(in) = chloride(out). It catalyses the reaction iodide(out) = iodide(in). The enzyme catalyses thiocyanate(in) = thiocyanate(out). It carries out the reaction nitrate(in) = nitrate(out). The catalysed reaction is bromide(in) = bromide(out). It catalyses the reaction fluoride(in) = fluoride(out). In terms of biological role, in the soluble state, catalyzes glutaredoxin-like thiol disulfide exchange reactions with reduced glutathione as electron donor. Reduces selenite and dehydroascorbate and may act as an antioxidant during oxidative stress response. Can insert into membranes and form voltage-dependent multi-ion conductive channels. Membrane insertion seems to be redox-regulated and may occur only under oxidizing conditions. Involved in regulation of the cell cycle. In Bos taurus (Bovine), this protein is Chloride intracellular channel protein 1 (CLIC1).